Reading from the N-terminus, the 1335-residue chain is Bifunctional autolysin (1335 aa).

The N-terminal stretch at 1–29 (MAKKFNYKLPSMVALTLFGTAFTAHQANA) is a signal peptide. Disordered regions lie at residues 51–88 (QAEK…QSTT), 100–262 (NEIS…KYKE), and 514–535 (WGTT…NNKL). Composition is skewed to polar residues over residues 58 to 88 (EVTQ…QSTT), 100 to 127 (NEIS…VTKN), 143 to 155 (TDTN…QSVA), 176 to 223 (TASQ…NASG), and 244 to 258 (SLNN…TTSY). An N-acetylmuramoyl-L-alanine amidase region spans residues 303-863 (VSSQKTSSLP…LSTQSTPAPK (561 aa)). The segment covering 515–531 (GTTSTKPSQPSKPSGGT) has biased composition (low complexity). GW domains are found at residues 533–610 (NKLT…YNTA), 612–686 (APVK…TASK), 700–774 (TVTN…YNTA), 776–850 (SPVK…APSK), 868–943 (STQT…TQNI), 945–1020 (KQTQ…QNST), and 1023–1096 (QSTP…KEKI). The tract at residues 864–1335 (QVKPSTQTVN…GKYFEIPIYK (472 aa)) is endo-beta-N-acetylglucosaminidase.

This sequence in the N-terminal section; belongs to the N-acetylmuramoyl-L-alanine amidase 2 family. It in the C-terminal section; belongs to the glycosyl hydrolase 73 family. In terms of assembly, oligomer; forms a ring structure at the cell surface which is important for efficient partitioning of daughter cells after cell division. In terms of processing, undergoes proteolytic processing to generate the two extracellular lytic enzymes, probably at the septal region on the cell surface.

It localises to the secreted. It carries out the reaction Hydrolyzes the link between N-acetylmuramoyl residues and L-amino acid residues in certain cell-wall glycopeptides.. It catalyses the reaction an N(4)-(oligosaccharide-(1-&gt;3)-[oligosaccharide-(1-&gt;6)]-beta-D-Man-(1-&gt;4)-beta-D-GlcNAc-(1-&gt;4)-alpha-D-GlcNAc)-L-asparaginyl-[protein] + H2O = an oligosaccharide-(1-&gt;3)-[oligosaccharide-(1-&gt;6)]-beta-D-Man-(1-&gt;4)-D-GlcNAc + N(4)-(N-acetyl-beta-D-glucosaminyl)-L-asparaginyl-[protein]. In terms of biological role, endohydrolysis of the di-N-acetylchitobiosyl unit in high-mannose glycopeptides and glycoproteins containing the -[(Man)5(GlcNAc)2]-Asn structure. One N-acetyl-D-glucosamine residue remains attached to the protein; the rest of the oligosaccharide is released intact. Cleaves the peptidoglycan connecting the daughter cells at the end of the cell division cycle, resulting in the separation of the two newly divided cells. Acts as an autolysin in penicillin-induced lysis. The polypeptide is Bifunctional autolysin (atl) (Staphylococcus epidermidis (strain ATCC 12228 / FDA PCI 1200)).